The following is a 564-amino-acid chain: Ferric/cupric reductase transmembrane component 2 (564 aa).

The next 2 helical transmembrane spans lie at 10–30 (TLGSIALIFVLLIGFALLFLL) and 66–86 (FIFLATHKAQMTLILSPLVML). N-linked (GlcNAc...) asparagine glycosylation is present at Asn-106. A helical transmembrane segment spans residues 110–130 (VAARLGYLSCGLFFVSYFFSL). The 116-residue stretch at 114-229 (LGYLSCGLFF…TCSVLIIFLI (116 aa)) folds into the Ferric oxidoreductase domain. His-150 and His-164 together coordinate heme. 3 consecutive transmembrane segments (helical) span residues 152-172 (WLSVYAVLISVLHGILFMIFS), 184-204 (ISIYGYFITVVLFLMTVASLP), and 210-230 (FFEWFFVLHHTCSVLIIFLIW). Residues His-218 and His-232 each contribute to the heme site. The 157-residue stretch at 254–410 (RLFRSIWNRS…DGPYGTTSNV (157 aa)) folds into the FAD-binding FR-type domain. Residue Asn-261 is glycosylated (N-linked (GlcNAc...) asparagine). 310–316 (HPFTLAS) is a binding site for FAD. A glycan (N-linked (GlcNAc...) asparagine) is linked at Asn-350. 419–427 (LIAGGVGFS) is a binding site for NAD(+). N-linked (GlcNAc...) asparagine glycans are attached at residues Asn-442, Asn-496, and Asn-548.

It belongs to the ferric reductase (FRE) family. It depends on FAD as a cofactor. Heme is required as a cofactor.

It localises to the cell membrane. The protein localises to the endoplasmic reticulum membrane. The catalysed reaction is 2 a Fe(II)-siderophore + NADP(+) + H(+) = 2 a Fe(III)-siderophore + NADPH. Functionally, metalloreductase responsible for reducing extracellular iron and copper prior to import. Catalyzes the reductive uptake of Fe(3+)-salts and Fe(3+) bound to catecholate or hydroxamate siderophores. Fe(3+) is reduced to Fe(2+), which then dissociates from the siderophore and can be imported by the high-affinity Fe(2+) transport complex in the plasma membrane. Also participates in Cu(2+) reduction and Cu(+) uptake. The sequence is that of Ferric/cupric reductase transmembrane component 2 (frp2) from Schizosaccharomyces pombe (strain 972 / ATCC 24843) (Fission yeast).